A 72-amino-acid polypeptide reads, in one-letter code: Translation initiation factor IF-1 (72 aa).

In terms of domain architecture, S1-like spans 1 to 72 (MAKEDCIEME…SKGRIIYRAR (72 aa)).

This sequence belongs to the IF-1 family. In terms of assembly, component of the 30S ribosomal translation pre-initiation complex which assembles on the 30S ribosome in the order IF-2 and IF-3, IF-1 and N-formylmethionyl-tRNA(fMet); mRNA recruitment can occur at any time during PIC assembly.

The protein resides in the cytoplasm. Its function is as follows. One of the essential components for the initiation of protein synthesis. Stabilizes the binding of IF-2 and IF-3 on the 30S subunit to which N-formylmethionyl-tRNA(fMet) subsequently binds. Helps modulate mRNA selection, yielding the 30S pre-initiation complex (PIC). Upon addition of the 50S ribosomal subunit IF-1, IF-2 and IF-3 are released leaving the mature 70S translation initiation complex. The polypeptide is Translation initiation factor IF-1 (Pseudoalteromonas atlantica (strain T6c / ATCC BAA-1087)).